Reading from the N-terminus, the 629-residue chain is Glutamyl-tRNA(Gln) amidotransferase subunit E (629 aa).

The tract at residues 405-426 (PEETRRALPDGNTQYMRPLPGK) is disordered.

It belongs to the GatB/GatE family. GatE subfamily. Heterodimer of GatD and GatE.

It carries out the reaction L-glutamyl-tRNA(Gln) + L-glutamine + ATP + H2O = L-glutaminyl-tRNA(Gln) + L-glutamate + ADP + phosphate + H(+). Its function is as follows. Allows the formation of correctly charged Gln-tRNA(Gln) through the transamidation of misacylated Glu-tRNA(Gln) in organisms which lack glutaminyl-tRNA synthetase. The reaction takes place in the presence of glutamine and ATP through an activated gamma-phospho-Glu-tRNA(Gln). The GatDE system is specific for glutamate and does not act on aspartate. The sequence is that of Glutamyl-tRNA(Gln) amidotransferase subunit E from Thermococcus sibiricus (strain DSM 12597 / MM 739).